A 410-amino-acid polypeptide reads, in one-letter code: MKTPGVLLLILGLLASSSFAIIRIPLRKFTSIRRTMTEVGGSVEDLILKGPITKYSMQSSPKTTEPVSELLKNYLDAQYYGDIGIGTPPQCFTVVFDTGSSNLWVPSIHCKILDIACWVHHKYNSDKSSTYVKNGTSFDIHYGSGSLSGYLSQDTVSVPCKSDQSKARGIKVEKQIFGEATKQPGIVFVAAKFDGILGMGYPHISVNNVLPVFDNLMQQKLVDKNIFSFYLNRDPEGQPGGELMLGGTDSKYYHGELSYLNVTRKAYWQVHMDQLEVGNELTLCKGGCEAIVDTGTSLLVGPVEEVKELQKAIGAVPLIQGEYMIPCEKVSSLPTVYLKLGGKNYELHPDKYILKVSQGGKTICLSGFMGMDIPPPSGPLWILGDVFIGSYYTVFDRDNNRVGFANAVVL.

Residues 1 to 20 (MKTPGVLLLILGLLASSSFA) form the signal peptide. Residues 21–64 (IIRIPLRKFTSIRRTMTEVGGSVEDLILKGPITKYSMQSSPKTT) constitute a propeptide, activation peptide. In terms of domain architecture, Peptidase A1 spans 79–405 (YYGDIGIGTP…DRDNNRVGFA (327 aa)). 2 disulfide bridges follow: C91–C160 and C110–C117. D97 is an active-site residue. N-linked (GlcNAc...) asparagine glycosylation is present at N134. The N-linked (GlcNAc...) (high mannose) asparagine glycan is linked to N261. Cysteines 284 and 288 form a disulfide. D293 is an active-site residue. C327 and C364 form a disulfide bridge.

This sequence belongs to the peptidase A1 family. As to quaternary structure, consists of a light chain and a heavy chain. Interacts with ADAM30; this leads to activation of CTSD. Interacts with GRN; stabilizes CTSD; increases its proteolytic activity. In terms of processing, N- and O-glycosylated. Post-translationally, undergoes proteolytic cleavage and activation by ADAM30.

Its subcellular location is the lysosome. The protein localises to the melanosome. It is found in the secreted. It localises to the extracellular space. It carries out the reaction Specificity similar to, but narrower than, that of pepsin A. Does not cleave the 4-Gln-|-His-5 bond in B chain of insulin.. Its function is as follows. Acid protease active in intracellular protein breakdown. Plays a role in APP processing following cleavage and activation by ADAM30 which leads to APP degradation. This Mus musculus (Mouse) protein is Cathepsin D (Ctsd).